The primary structure comprises 246 residues: Bis(5'-nucleosyl)-tetraphosphatase PrpE [asymmetrical] (246 aa).

Belongs to the PrpE family. It depends on Ni(2+) as a cofactor.

It catalyses the reaction P(1),P(4)-bis(5'-guanosyl) tetraphosphate + H2O = GMP + GTP + 2 H(+). Asymmetrically hydrolyzes Ap4p to yield AMP and ATP. The chain is Bis(5'-nucleosyl)-tetraphosphatase PrpE [asymmetrical] from Bacillus thuringiensis subsp. konkukian (strain 97-27).